The following is a 143-amino-acid chain: Large ribosomal subunit protein uL15 (143 aa).

Basic residues-rich tracts occupy residues 1–13 (MIRK…KMRG) and 23–38 (KKHR…GNAG). A disordered region spans residues 1 to 38 (MIRKSKKITKMRGSRTCGYGEAKKHRGAGHRGGRGNAG).

It belongs to the universal ribosomal protein uL15 family. In terms of assembly, part of the 50S ribosomal subunit.

Functionally, binds to the 23S rRNA. The chain is Large ribosomal subunit protein uL15 from Methanococcus maripaludis (strain C6 / ATCC BAA-1332).